Reading from the N-terminus, the 147-residue chain is Ribonuclease P protein component 2 (147 aa).

The protein belongs to the eukaryotic/archaeal RNase P protein component 2 family. As to quaternary structure, consists of a catalytic RNA component and at least 4-5 protein subunits.

It localises to the cytoplasm. The catalysed reaction is Endonucleolytic cleavage of RNA, removing 5'-extranucleotides from tRNA precursor.. Its function is as follows. Part of ribonuclease P, a protein complex that generates mature tRNA molecules by cleaving their 5'-ends. This Methanocorpusculum labreanum (strain ATCC 43576 / DSM 4855 / Z) protein is Ribonuclease P protein component 2.